We begin with the raw amino-acid sequence, 97 residues long: Core protein A15 homolog (97 aa).

It belongs to the chordopoxvirinae A15 family. Part of a complex composed of A30, G7, F10 kinase, A15, D2, D3, and J1.

It localises to the host cytoplasm. Its subcellular location is the virion. Its function is as follows. Late protein which is a part of a large complex required for early virion morphogenesis. This complex participates in the formation of virosomes and the incorporation of virosomal contents into nascent immature virions. A15 is required for the stability and kinase activity of F10. The sequence is that of Core protein A15 homolog from Vertebrata (FPV).